A 313-amino-acid chain; its full sequence is Acetaldehyde dehydrogenase 2 (313 aa).

12-15 provides a ligand contact to NAD(+); it reads SGNI. The Acyl-thioester intermediate role is filled by cysteine 132. NAD(+) contacts are provided by residues 163–171 and asparagine 287; that span reads SAGPGTRAN.

It belongs to the acetaldehyde dehydrogenase family.

The enzyme catalyses acetaldehyde + NAD(+) + CoA = acetyl-CoA + NADH + H(+). This is Acetaldehyde dehydrogenase 2 (amnH) from Paraburkholderia xenovorans (strain LB400).